We begin with the raw amino-acid sequence, 259 residues long: Zinc import ATP-binding protein ZnuC (259 aa).

An ABC transporter domain is found at 6–223; it reads VTVQSVSVTL…PAYHELFGPG (218 aa). Residue 38-45 coordinates ATP; the sequence is GPNGAGKS. The disordered stretch occupies residues 230 to 259; the sequence is ALYTHDHDHDHDLHGNATHSHDHNGPCNHD. The span at 233–259 shows a compositional bias: basic and acidic residues; it reads THDHDHDHDLHGNATHSHDHNGPCNHD.

It belongs to the ABC transporter superfamily. Zinc importer (TC 3.A.1.15.5) family. As to quaternary structure, the complex is composed of two ATP-binding proteins (ZnuC), two transmembrane proteins (ZnuB) and a solute-binding protein (ZnuA).

Its subcellular location is the cell inner membrane. It carries out the reaction Zn(2+)(out) + ATP(in) + H2O(in) = Zn(2+)(in) + ADP(in) + phosphate(in) + H(+)(in). In terms of biological role, part of the ABC transporter complex ZnuABC involved in zinc import. Responsible for energy coupling to the transport system. The chain is Zinc import ATP-binding protein ZnuC from Alcanivorax borkumensis (strain ATCC 700651 / DSM 11573 / NCIMB 13689 / SK2).